A 333-amino-acid polypeptide reads, in one-letter code: Transcription termination factor MTERF6, chloroplastic/mitochondrial (333 aa).

The protein belongs to the mTERF family.

It localises to the plastid. The protein resides in the chloroplast. Its subcellular location is the mitochondrion. In terms of biological role, transcription termination factor essential for chloroplast development. Required for maturation of 16S rRNA, 18S rRNA and 23S rRNA in the chloroplast. Binds to a specific region within the tRNA(Ile)(GAU) gene at a position adjacent to and downstream of the 16S rRNA gene. Required for the maturation of tRNA(Ile)(GAU). Binds to double-stranded DNA. This Arabidopsis thaliana (Mouse-ear cress) protein is Transcription termination factor MTERF6, chloroplastic/mitochondrial.